The following is a 424-amino-acid chain: Tubulin-specific chaperone cofactor E-like protein (424 aa).

A phosphoserine mark is found at serine 18 and serine 41. LRR repeat units follow at residues 73–98 (CAHV…IVSN), 99–123 (VPQL…TCAG), 124–147 (SFSG…HTIL), 150–172 (LPDL…PSVC), 173–197 (CHSL…KLGV), 199–224 (FPSL…SLAR), and 226–250 (FPNL…KLNS). The LRRCT domain maps to 262–303 (IPLLQPYTTEERRKLVVARLPSVSKLNGSVVTDGEREDSERF). One can recognise a Ubiquitin-like domain in the interval 334–424 (AEVDLRPQSS…DKIFVESKTK (91 aa)). Residues 350–375 (FNDQVEEVSIRLDQTVAELKRQLKTL) are a coiled coil.

It localises to the cytoplasm. The protein localises to the cytoskeleton. Its function is as follows. Acts as a regulator of tubulin stability. The protein is Tubulin-specific chaperone cofactor E-like protein (Tbcel) of Rattus norvegicus (Rat).